The primary structure comprises 285 residues: Hypersensitive-induced reaction 1 protein (285 aa).

Residue glycine 2 is the site of N-myristoyl glycine attachment. A coiled-coil region spans residues phenylalanine 118–glutamate 190.

In terms of assembly, homo- and heterodimer. Interacts with LRR1 (via LRR domain). Constitutively expressed in stems, roots and flowers, but not in leaves and fruits.

Functionally, positive regulator of hypersensitive response (HR)-like cell death. May be involved in potassium ion channel regulation. In Capsicum annuum (Capsicum pepper), this protein is Hypersensitive-induced reaction 1 protein.